The following is a 421-amino-acid chain: Histidine--tRNA ligase (421 aa).

This sequence belongs to the class-II aminoacyl-tRNA synthetase family. Homodimer.

The protein resides in the cytoplasm. The enzyme catalyses tRNA(His) + L-histidine + ATP = L-histidyl-tRNA(His) + AMP + diphosphate + H(+). In Francisella tularensis subsp. holarctica (strain OSU18), this protein is Histidine--tRNA ligase.